A 361-amino-acid chain; its full sequence is Chorismate synthase (361 aa).

NADP(+) is bound by residues arginine 48 and arginine 54. FMN contacts are provided by residues 125-127 (RSS), 238-239 (NA), glycine 278, 293-297 (KPTSS), and arginine 319.

The protein belongs to the chorismate synthase family. Homotetramer. It depends on FMNH2 as a cofactor.

The catalysed reaction is 5-O-(1-carboxyvinyl)-3-phosphoshikimate = chorismate + phosphate. It functions in the pathway metabolic intermediate biosynthesis; chorismate biosynthesis; chorismate from D-erythrose 4-phosphate and phosphoenolpyruvate: step 7/7. Its function is as follows. Catalyzes the anti-1,4-elimination of the C-3 phosphate and the C-6 proR hydrogen from 5-enolpyruvylshikimate-3-phosphate (EPSP) to yield chorismate, which is the branch point compound that serves as the starting substrate for the three terminal pathways of aromatic amino acid biosynthesis. This reaction introduces a second double bond into the aromatic ring system. The sequence is that of Chorismate synthase from Shigella flexneri.